A 284-amino-acid polypeptide reads, in one-letter code: Bifunctional protein FolD (284 aa).

NADP(+)-binding positions include 166–168 (GAS) and I232.

It belongs to the tetrahydrofolate dehydrogenase/cyclohydrolase family. In terms of assembly, homodimer.

The catalysed reaction is (6R)-5,10-methylene-5,6,7,8-tetrahydrofolate + NADP(+) = (6R)-5,10-methenyltetrahydrofolate + NADPH. The enzyme catalyses (6R)-5,10-methenyltetrahydrofolate + H2O = (6R)-10-formyltetrahydrofolate + H(+). It functions in the pathway one-carbon metabolism; tetrahydrofolate interconversion. Functionally, catalyzes the oxidation of 5,10-methylenetetrahydrofolate to 5,10-methenyltetrahydrofolate and then the hydrolysis of 5,10-methenyltetrahydrofolate to 10-formyltetrahydrofolate. This chain is Bifunctional protein FolD, found in Shewanella sp. (strain ANA-3).